The chain runs to 105 residues: Thioredoxin-like protein slr0233 (105 aa).

One can recognise a Thioredoxin domain in the interval 1–102 (MAVKKQFANF…QAAQLIQQLQ (102 aa)). Cys30 and Cys33 are joined by a disulfide.

It belongs to the thioredoxin family.

This Synechocystis sp. (strain ATCC 27184 / PCC 6803 / Kazusa) protein is Thioredoxin-like protein slr0233.